The chain runs to 153 residues: 6,7-dimethyl-8-ribityllumazine synthase (153 aa).

5-amino-6-(D-ribitylamino)uracil is bound by residues Phe22, 56–58 (AFE), and 80–82 (TVI). 85–86 (ST) is a binding site for (2S)-2-hydroxy-3-oxobutyl phosphate. Residue His88 is the Proton donor of the active site. Phe113 serves as a coordination point for 5-amino-6-(D-ribitylamino)uracil. Arg127 contacts (2S)-2-hydroxy-3-oxobutyl phosphate.

It belongs to the DMRL synthase family. Forms an icosahedral capsid composed of 60 subunits, arranged as a dodecamer of pentamers.

It catalyses the reaction (2S)-2-hydroxy-3-oxobutyl phosphate + 5-amino-6-(D-ribitylamino)uracil = 6,7-dimethyl-8-(1-D-ribityl)lumazine + phosphate + 2 H2O + H(+). Its pathway is cofactor biosynthesis; riboflavin biosynthesis; riboflavin from 2-hydroxy-3-oxobutyl phosphate and 5-amino-6-(D-ribitylamino)uracil: step 1/2. Functionally, catalyzes the formation of 6,7-dimethyl-8-ribityllumazine by condensation of 5-amino-6-(D-ribitylamino)uracil with 3,4-dihydroxy-2-butanone 4-phosphate. This is the penultimate step in the biosynthesis of riboflavin. The chain is 6,7-dimethyl-8-ribityllumazine synthase from Actinobacillus pleuropneumoniae (Haemophilus pleuropneumoniae).